A 196-amino-acid chain; its full sequence is GTP cyclohydrolase-2 (196 aa).

GTP is bound at residue 49 to 53 (RIHSE). Residues C54, C65, and C67 each coordinate Zn(2+). GTP contacts are provided by residues Q70, 92–94 (EGR), and T114. D126 acts as the Proton acceptor in catalysis. R128 serves as the catalytic Nucleophile. Residues T149 and K154 each contribute to the GTP site.

This sequence belongs to the GTP cyclohydrolase II family. As to quaternary structure, homodimer. Zn(2+) serves as cofactor.

The enzyme catalyses GTP + 4 H2O = 2,5-diamino-6-hydroxy-4-(5-phosphoribosylamino)-pyrimidine + formate + 2 phosphate + 3 H(+). The protein operates within cofactor biosynthesis; riboflavin biosynthesis; 5-amino-6-(D-ribitylamino)uracil from GTP: step 1/4. Its function is as follows. Catalyzes the conversion of GTP to 2,5-diamino-6-ribosylamino-4(3H)-pyrimidinone 5'-phosphate (DARP), formate and pyrophosphate. This Buchnera aphidicola subsp. Schizaphis graminum (strain Sg) protein is GTP cyclohydrolase-2.